The chain runs to 321 residues: Ferredoxin--NADP reductase (321 aa).

FAD is bound by residues Glu33, Gln41, Tyr46, Val86, Leu119, Asp277, and Ser318.

Belongs to the ferredoxin--NADP reductase type 2 family. As to quaternary structure, homodimer. The cofactor is FAD.

It catalyses the reaction 2 reduced [2Fe-2S]-[ferredoxin] + NADP(+) + H(+) = 2 oxidized [2Fe-2S]-[ferredoxin] + NADPH. The chain is Ferredoxin--NADP reductase from Lactococcus lactis subsp. cremoris (strain SK11).